The following is a 215-amino-acid chain: FMN-dependent NADH:quinone oxidoreductase (215 aa).

17 to 19 serves as a coordination point for FMN; sequence SAS.

It belongs to the azoreductase type 1 family. Homodimer. FMN is required as a cofactor.

It catalyses the reaction 2 a quinone + NADH + H(+) = 2 a 1,4-benzosemiquinone + NAD(+). The catalysed reaction is N,N-dimethyl-1,4-phenylenediamine + anthranilate + 2 NAD(+) = 2-(4-dimethylaminophenyl)diazenylbenzoate + 2 NADH + 2 H(+). In terms of biological role, quinone reductase that provides resistance to thiol-specific stress caused by electrophilic quinones. Also exhibits azoreductase activity. Catalyzes the reductive cleavage of the azo bond in aromatic azo compounds to the corresponding amines. The chain is FMN-dependent NADH:quinone oxidoreductase from Clostridium botulinum (strain Eklund 17B / Type B).